The following is a 326-amino-acid chain: Methyltransferase phqN (326 aa).

It belongs to the class I-like SAM-binding methyltransferase superfamily. Erg6/SMT family.

It participates in alkaloid biosynthesis. Methyltransferase; part of the gene cluster that mediates the biosynthesis of paraherquamide, a fungal indole alkaloid that belongs to a family of natural products containing a characteristic bicyclo[2.2.2]diazaoctane core. The first steps in the biosynthesis of paraherquamide is the production of the beta-methyl-proline precursor from L-isoleucine. They require oxidation of a terminally hydroxylated L-isoleucine to the corresponding aldehyde by enzymes which have still to be identified. Spontaneous cyclization and dehydration would yield the 4-methyl pyrolline-5-carboxylic acid, which is then reduced by the pyrroline-5-carboxylate reductase phqD leading to the beta-methyl-proline precursor. The next step of paraherquamide biosynthesis involves coupling of beta-methyl-proline and L-tryptophan by the bimodular NRPS phqB, to produce a monooxopiperazine intermediate. The reductase (R) domain of phqB utilizes NADPH for hydride transfer to reduce the thioester bond of the T domain-tethered linear dipeptide to a hemithioaminal intermediate, which spontaneously cleaves the C-S bond to release the aldehyde product. This compound undergoes spontaneous cyclization and dehydration to give a dienamine which is reverse prenylated at C-2 by the reverse prenyltransferase phqJ. The other prenyltransferase present in the cluster, phqI may be a redundant gene in the pathway. During biosynthetic assembly, the key step to produce the polycyclic core is catalyzed by the bifunctional reductase and intramolecular [4+2] Diels-Alderase, phqE, resulting in formation of the [2.2.2] diazaoctane intermediate preparaherquamide. Following formation of preparaherquamide, an indole 2,3-epoxidation-initiated pinacol-like rearrangement is catalyzed by the phqK FAD-dependent monooxygenase. The prenyltransferase phqA, the cytochrome P450 monooxygenase phqL, and the FAD-linked oxidoreductase phqH (or the cytochrome P450 monooxygenase phqM), are proposed to be involved in the formation of the pyran ring. The FAD-dependent monooxygenase phqK is likely responsible for generation of the spiro-oxindole, and the N-methylation is likely mediated by the phqN methyltransferase leading to the isolable natural product paraherquamide F. However, the order of these biosynthetic steps has still to be determined. In late-stage paraherquamide biosynthesis, the third P450 monooxygenase, phqO, is probably responsible for the C-14 hydroxylation, transforming paraherquamide F to paraherquamide G, and paraherquamide E to the final product paraherquamide A. The expansion from the 6-membered ring pyran (in paraherquamides F and G) to the 7-membered dioxepin ring (in paraherquamides A and E) represents a poorly understood but intriguing process that probably involves the 2-oxoglutarate-dependent dioxygenase phqC. Finally, the remaining members of the paraherquamide cluster, including phqI as well as phqM (or phqH), do not have a clearly prescribed role and appear to be redundant. The chain is Methyltransferase phqN from Penicillium fellutanum.